Consider the following 936-residue polypeptide: Aconitate hydratase A (936 aa).

The segment at valine 401 to threonine 449 is disordered. Over residues threonine 412–threonine 422 the composition is skewed to polar residues. 3 residues coordinate [4Fe-4S] cluster: cysteine 472, cysteine 538, and cysteine 541.

Belongs to the aconitase/IPM isomerase family. Monomer. The cofactor is [4Fe-4S] cluster.

The enzyme catalyses citrate = D-threo-isocitrate. It catalyses the reaction (2S,3R)-3-hydroxybutane-1,2,3-tricarboxylate = 2-methyl-cis-aconitate + H2O. Its pathway is carbohydrate metabolism; tricarboxylic acid cycle; isocitrate from oxaloacetate: step 2/2. The protein operates within organic acid metabolism; propanoate degradation. Its function is as follows. Involved in the catabolism of short chain fatty acids (SCFA) via the tricarboxylic acid (TCA)(acetyl degradation route) and probably via the 2-methylcitrate cycle I (propionate degradation route). Catalyzes the reversible isomerization of citrate to isocitrate via cis-aconitate. Could catalyze the hydration of 2-methyl-cis-aconitate to yield (2R,3S)-2-methylisocitrate. The apo form of AcnA functions as a RNA-binding regulatory protein. This is Aconitate hydratase A (acn) from Corynebacterium jeikeium (strain K411).